A 71-amino-acid polypeptide reads, in one-letter code: MNQSAQNYFSVQKPSETSSGPYTSPPPIGYPTRDAVVGDPPAAAVETNSKGVNPEGCCAAICCCCVLDACF.

Polar residues predominate over residues 1–22 (MNQSAQNYFSVQKPSETSSGPY). The disordered stretch occupies residues 1 to 35 (MNQSAQNYFSVQKPSETSSGPYTSPPPIGYPTRDA). Residues 48–64 (NSKGVNPEGCCAAICCC) traverse the membrane as a helical segment.

The protein belongs to the CYSTM1 family. Mostly expressed in stems, siliques, roots and flowers and, to a lower extent, in leaves.

It is found in the membrane. The protein localises to the nucleus. In terms of biological role, involved in resistance to abiotic stress. This is Protein CYSTEINE-RICH TRANSMEMBRANE MODULE 8 from Arabidopsis thaliana (Mouse-ear cress).